The sequence spans 164 residues: Peptide deformylase (164 aa).

Fe cation contacts are provided by cysteine 87 and histidine 129. Glutamate 130 is an active-site residue. Fe cation is bound at residue histidine 133.

This sequence belongs to the polypeptide deformylase family. Fe(2+) serves as cofactor.

It catalyses the reaction N-terminal N-formyl-L-methionyl-[peptide] + H2O = N-terminal L-methionyl-[peptide] + formate. Its function is as follows. Removes the formyl group from the N-terminal Met of newly synthesized proteins. Requires at least a dipeptide for an efficient rate of reaction. N-terminal L-methionine is a prerequisite for activity but the enzyme has broad specificity at other positions. The polypeptide is Peptide deformylase (Thermotoga maritima (strain ATCC 43589 / DSM 3109 / JCM 10099 / NBRC 100826 / MSB8)).